The sequence spans 576 residues: MSVACTIRRHIIEKLHVLNIDNFVVTNESILAKLIVDYPNNPDHGDLYTNAALILSKYIKKNPMDIAKILVDEFSSIKEISDINVVKPGFINFNISLDVWYEIIISINRLKEKFGHVNFGNGKRVNIEFVSANPTGPMHIGHARGAIFGDVLANLLERVGYEVVREYYINDAGAQVDVLVESVYLRYKEVLGENIVIGSGLYPGLYLKDIGKLLYQEYGSGLLGMDYSQRRRIIRDVSLMYLMKLIKEDLALLGIKHDIFTSESQLQKDNIVQKCVELLQEKQLIYYGTLDQPKGTEGINWKPRTQMLFKSTDFGDDVDRALQKADGSWTYFANDIAYHFYKISRGFQHMILELGSDHIGYVKRLKAAVKALSDGNATIDIKLHSIVNFLDNGAQVKMSKRSGEFLTIKDVIEKVGKDVVRFIMLTRKSDVVLDFDFAKVVEQSKNNPVFYVQYAHARVHSLIRNAPKILEIELVDFSVLSSKEEILLIKLLAKWQDIVEISAKTAEPHRITFYLIEVAEAFHALWGYGNKSTDMRFIVDNNINLTSARIYLAKSVGYVIASGLTIFSIVPLTEMK.

The 'HIGH' region signature appears at 132 to 142 (ANPTGPMHIGH).

Belongs to the class-I aminoacyl-tRNA synthetase family. In terms of assembly, monomer.

It localises to the cytoplasm. The catalysed reaction is tRNA(Arg) + L-arginine + ATP = L-arginyl-tRNA(Arg) + AMP + diphosphate. The polypeptide is Arginine--tRNA ligase (Ehrlichia ruminantium (strain Gardel)).